A 470-amino-acid chain; its full sequence is MTASCWTICLFLLGSVTEFIVLASPEVNESQQQHPQNVYHDIGVTRNKIVTAQFECYQKIMKDNSQDRRGPVCNRTWDGWLCWDDTEAGITSEQHCPDYFQDFDPTEMVTKICTESGQWFLHPESNRTWTNFTRCNLHTTEGRRTAMNLFYLALIGHGLSLTSLFISLGIFFHFKSLSCQRITLHKNLFFSFVLNSIITIIWLTAVANNQELVQQNPISCKISQFIHLYIFGCNYFWMLCEGIYLHTLIVVAVFAEKQHLMWYYLLGWGFPLIPATIHAVARSYYYNDNCWISSNTSLLYIIHGPICAAMLVNLFFLLNIVRVLITKLKVTHQAKSSLYMKAVRATLILVPLLGIQYVLLPYKPSGRVSAEIYDYIMHILMHYQGLLVATIFCFFNGEVQAVLRRHWNQYRIQFGSTITQSDALRSASYTASSITEVQGCYSIDGHTEHLNGKNYHDFDNAIIKPENPFA.

The N-terminal stretch at 1 to 23 (MTASCWTICLFLLGSVTEFIVLA) is a signal peptide. Over 24–147 (SPEVNESQQQ…HTTEGRRTAM (124 aa)) the chain is Extracellular. N-linked (GlcNAc...) asparagine glycans are attached at residues Asn28, Asn74, Asn126, and Asn131. 3 cysteine pairs are disulfide-bonded: Cys56-Cys82, Cys73-Cys113, and Cys96-Cys135. The chain crosses the membrane as a helical span at residues 148–172 (NLFYLALIGHGLSLTSLFISLGIFF). Residues 173-183 (HFKSLSCQRIT) lie on the Cytoplasmic side of the membrane. Residues 184 to 206 (LHKNLFFSFVLNSIITIIWLTAV) form a helical membrane-spanning segment. Topologically, residues 207–217 (ANNQELVQQNP) are extracellular. The helical transmembrane segment at 218-246 (ISCKISQFIHLYIFGCNYFWMLCEGIYLH) threads the bilayer. Residues 247–260 (TLIVVAVFAEKQHL) lie on the Cytoplasmic side of the membrane. A helical transmembrane segment spans residues 261-281 (MWYYLLGWGFPLIPATIHAVA). The Extracellular portion of the chain corresponds to 282–297 (RSYYYNDNCWISSNTS). Asn295 carries an N-linked (GlcNAc...) asparagine glycan. Residues 298–322 (LLYIIHGPICAAMLVNLFFLLNIVR) traverse the membrane as a helical segment. At 323 to 337 (VLITKLKVTHQAKSS) the chain is on the cytoplasmic side. A helical membrane pass occupies residues 338–359 (LYMKAVRATLILVPLLGIQYVL). At 360 to 374 (LPYKPSGRVSAEIYD) the chain is on the extracellular side. A helical membrane pass occupies residues 375–395 (YIMHILMHYQGLLVATIFCFF). The Cytoplasmic segment spans residues 396-470 (NGEVQAVLRR…AIIKPENPFA (75 aa)).

Belongs to the G-protein coupled receptor 2 family.

Its subcellular location is the cell membrane. Its function is as follows. May function as G protein-coupled receptor for calcitonin-gene-related peptides and adrenomedullin. Specificity may be modulated by accessory proteins. May activate cAMP-dependent pathway. This Danio rerio (Zebrafish) protein is Calcitonin gene-related peptide type 1 receptor (calcrla).